Consider the following 214-residue polypeptide: Adenylate kinase (214 aa).

ATP is bound at residue 10–15 (GAGKGT). Residues 30 to 59 (STGDMLRAAVKAGTELGKQAKEIMDAGKLV) form an NMP region. Residues T31, R36, 57–59 (KLV), 85–88 (GFPR), and Q92 contribute to the AMP site. The tract at residues 122-159 (GRRVHAASGRVYHVKFNPPKVEDKDDVTGEDLSVRKDD) is LID. ATP contacts are provided by residues R123 and 132-133 (VY). 2 residues coordinate AMP: R156 and R167. R200 is an ATP binding site.

The protein belongs to the adenylate kinase family. In terms of assembly, monomer.

The protein localises to the cytoplasm. The enzyme catalyses AMP + ATP = 2 ADP. It participates in purine metabolism; AMP biosynthesis via salvage pathway; AMP from ADP: step 1/1. In terms of biological role, catalyzes the reversible transfer of the terminal phosphate group between ATP and AMP. Plays an important role in cellular energy homeostasis and in adenine nucleotide metabolism. The protein is Adenylate kinase of Pectobacterium atrosepticum (strain SCRI 1043 / ATCC BAA-672) (Erwinia carotovora subsp. atroseptica).